Consider the following 198-residue polypeptide: Recombination protein RecR (198 aa).

Residues 57–72 (CSICGNLTDDDPCHIC) form a C4-type zinc finger. One can recognise a Toprim domain in the interval 80-175 (EIILVVEDSK…KVTRLARGLA (96 aa)).

The protein belongs to the RecR family.

May play a role in DNA repair. It seems to be involved in an RecBC-independent recombinational process of DNA repair. It may act with RecF and RecO. This is Recombination protein RecR from Streptococcus equi subsp. equi (strain 4047).